The sequence spans 614 residues: Lamin-2 (614 aa).

The segment covering 1-10 has biased composition (basic residues); the sequence is MSAQVSKKRG. The segment at 1-51 is disordered; the sequence is MSAQVSKKRGGSNPPKTGQHAASSTTSRTESSATSQTIYERQEVETRTQRT. A head region spans residues 1-76; it reads MSAQVSKKRG…GTAGLAGSPL (76 aa). Over residues 21 to 37 the composition is skewed to low complexity; sequence AASSTTSRTESSATSQT. The coil 1A stretch occupies residues 77-117; sequence SRHQEKEEFKLLNNRFANYIDTIRAQQEEISVLRRKVETVS. In terms of domain architecture, IF rod spans 81–433; the sequence is EKEEFKLLNN…ALLRTEEERL (353 aa). A linker 1 region spans residues 118 to 128; the sequence is SKEVVENQKIK. Residues 129–268 are coil 1B; sequence ERYNLEIANL…EEIVSLRNQR (140 aa). Positions 269-286 are linker 2; the sequence is RTEITEVETRMGEEYQSK. A coil 2 region spans residues 287–426; it reads IVEQLNDLRA…AELATYNALL (140 aa). The tail stretch occupies residues 427–611; that stretch reads RTEEERLNMK…ADSSDHQKNC (185 aa). Residues 433–454 are disordered; that stretch reads LNMKSPPFPSTPDSQRRGTKRR. Positions 449 to 458 match the Nuclear localization signal motif; that stretch reads RGTKRRIADS. One can recognise an LTD domain in the interval 462-581; that stretch reads TRFRNEASAT…VARREMTQSS (120 aa). Residue cysteine 611 is the site of S-farnesyl cysteine attachment. A propeptide spans 612 to 614 (removed in mature form); sequence VIM.

It belongs to the intermediate filament family.

The protein resides in the nucleus inner membrane. Intermediate filament (IF) protein, component of the nuclear lamina, a fibrous layer on the nucleoplasmic side of the inner nuclear membrane, which is thought to provide a framework for the nuclear envelope. The protein is Lamin-2 of Hypsibius exemplaris (Freshwater tardigrade).